The sequence spans 390 residues: Endoglucanase gh5-1 (390 aa).

The N-terminal stretch at M1–A16 is a signal peptide. One can recognise a CBM1 domain in the interval Q17 to Q52. N-linked (GlcNAc...) asparagine glycans are attached at residues N157 and N261.

Belongs to the glycosyl hydrolase 5 (cellulase A) family. Post-translationally, N-glycosylated.

The protein resides in the secreted. It carries out the reaction Endohydrolysis of (1-&gt;4)-beta-D-glucosidic linkages in cellulose, lichenin and cereal beta-D-glucans.. Its function is as follows. Endoglucanase that plays an important role in biomass degradation. Binds onto plant cell walls to participate in the hydrolysis of cellulose. In Neurospora crassa (strain ATCC 24698 / 74-OR23-1A / CBS 708.71 / DSM 1257 / FGSC 987), this protein is Endoglucanase gh5-1.